The chain runs to 138 residues: Large ribosomal subunit protein uL16c (138 aa).

Belongs to the universal ribosomal protein uL16 family. In terms of assembly, part of the 50S ribosomal subunit.

The protein resides in the plastid. Its subcellular location is the chloroplast. The chain is Large ribosomal subunit protein uL16c from Physcomitrium patens (Spreading-leaved earth moss).